The following is a 157-amino-acid chain: Small ribosomal subunit protein uS7 (157 aa).

Belongs to the universal ribosomal protein uS7 family. In terms of assembly, part of the 30S ribosomal subunit. Contacts proteins S9 and S11.

Its function is as follows. One of the primary rRNA binding proteins, it binds directly to 16S rRNA where it nucleates assembly of the head domain of the 30S subunit. Is located at the subunit interface close to the decoding center, probably blocks exit of the E-site tRNA. This chain is Small ribosomal subunit protein uS7, found in Marinomonas sp. (strain MWYL1).